A 369-amino-acid polypeptide reads, in one-letter code: Small ribosomal subunit biogenesis GTPase RsgA (369 aa).

The 156-residue stretch at 116 to 271 (GEQLIAANLD…LIDNPGIREI (156 aa)) folds into the CP-type G domain. GTP contacts are provided by residues 161-164 (NKID) and 213-221 (GSSGVGKST). Residues C294, C299, H301, and C307 each contribute to the Zn(2+) site.

It belongs to the TRAFAC class YlqF/YawG GTPase family. RsgA subfamily. As to quaternary structure, monomer. Associates with 30S ribosomal subunit, binds 16S rRNA. Zn(2+) is required as a cofactor.

It is found in the cytoplasm. Functionally, one of several proteins that assist in the late maturation steps of the functional core of the 30S ribosomal subunit. Helps release RbfA from mature subunits. May play a role in the assembly of ribosomal proteins into the subunit. Circularly permuted GTPase that catalyzes slow GTP hydrolysis, GTPase activity is stimulated by the 30S ribosomal subunit. This chain is Small ribosomal subunit biogenesis GTPase RsgA, found in Methanosarcina acetivorans (strain ATCC 35395 / DSM 2834 / JCM 12185 / C2A).